We begin with the raw amino-acid sequence, 303 residues long: N-acetyl-D-glucosamine kinase (303 aa).

ATP-binding positions include 4 to 11 (GFDVGGTK) and 133 to 140 (GFGGGLIF). 4 residues coordinate Zn(2+): His157, Cys177, Cys179, and Cys184.

It belongs to the ROK (NagC/XylR) family. NagK subfamily.

The enzyme catalyses N-acetyl-D-glucosamine + ATP = N-acetyl-D-glucosamine 6-phosphate + ADP + H(+). Its pathway is cell wall biogenesis; peptidoglycan recycling. Catalyzes the phosphorylation of N-acetyl-D-glucosamine (GlcNAc) derived from cell-wall degradation, yielding GlcNAc-6-P. This chain is N-acetyl-D-glucosamine kinase, found in Aliivibrio fischeri (strain ATCC 700601 / ES114) (Vibrio fischeri).